We begin with the raw amino-acid sequence, 88 residues long: UPF0367 protein Tery_1229 (88 aa).

It belongs to the UPF0367 family.

The protein is UPF0367 protein Tery_1229 of Trichodesmium erythraeum (strain IMS101).